A 251-amino-acid chain; its full sequence is Ubiquinone/menaquinone biosynthesis C-methyltransferase UbiE (251 aa).

S-adenosyl-L-methionine-binding positions include Thr-74, Asp-95, 123-124 (NA), and Ser-140.

This sequence belongs to the class I-like SAM-binding methyltransferase superfamily. MenG/UbiE family.

The catalysed reaction is a 2-demethylmenaquinol + S-adenosyl-L-methionine = a menaquinol + S-adenosyl-L-homocysteine + H(+). It catalyses the reaction a 2-methoxy-6-(all-trans-polyprenyl)benzene-1,4-diol + S-adenosyl-L-methionine = a 5-methoxy-2-methyl-3-(all-trans-polyprenyl)benzene-1,4-diol + S-adenosyl-L-homocysteine + H(+). It participates in quinol/quinone metabolism; menaquinone biosynthesis; menaquinol from 1,4-dihydroxy-2-naphthoate: step 2/2. The protein operates within cofactor biosynthesis; ubiquinone biosynthesis. Methyltransferase required for the conversion of demethylmenaquinol (DMKH2) to menaquinol (MKH2) and the conversion of 2-polyprenyl-6-methoxy-1,4-benzoquinol (DDMQH2) to 2-polyprenyl-3-methyl-6-methoxy-1,4-benzoquinol (DMQH2). The protein is Ubiquinone/menaquinone biosynthesis C-methyltransferase UbiE of Proteus mirabilis (strain HI4320).